The chain runs to 826 residues: Ribonucleoside-diphosphate reductase large subunit (826 aa).

Substrate contacts are provided by residues Thr171, 186–187, Gly217, 387–391, and 594–598; these read SC, NLCAE, and PTSGC. Cys187 and Cys403 are oxidised to a cystine. The active-site Proton acceptor is the Asn387. The Cysteine radical intermediate role is filled by Cys389. Glu391 functions as the Proton acceptor in the catalytic mechanism. The segment at 747-769 is disordered; sequence SVPREEQNERSPAEQMPPRPMEP. Residues 749–758 are compositionally biased toward basic and acidic residues; that stretch reads PREEQNERSP.

This sequence belongs to the ribonucleoside diphosphate reductase large chain family. Heterotetramer composed of a homodimer of the large subunit (R1) and a homodimer of the small subunit (R2). Larger multisubunit protein complex are also active, composed of (R1)n(R2)n.

The enzyme catalyses a 2'-deoxyribonucleoside 5'-diphosphate + [thioredoxin]-disulfide + H2O = a ribonucleoside 5'-diphosphate + [thioredoxin]-dithiol. Ribonucleoside-diphosphate reductase holoenzyme provides the precursors necessary for viral DNA synthesis. Allows virus growth in non-dividing cells, as well as reactivation from latency in infected hosts. Catalyzes the biosynthesis of deoxyribonucleotides from the corresponding ribonucleotides. This Homo sapiens (Human) protein is Ribonucleoside-diphosphate reductase large subunit.